Here is a 119-residue protein sequence, read N- to C-terminus: Large ribosomal subunit protein uL18 (119 aa).

Residues 1-20 form a disordered region; it reads MSQIDKASRRQKIKDRSRVK. Basic residues predominate over residues 9 to 20; the sequence is RRQKIKDRSRVK.

The protein belongs to the universal ribosomal protein uL18 family. In terms of assembly, part of the 50S ribosomal subunit; part of the 5S rRNA/L5/L18/L25 subcomplex. Contacts the 5S and 23S rRNAs.

Functionally, this is one of the proteins that bind and probably mediate the attachment of the 5S RNA into the large ribosomal subunit, where it forms part of the central protuberance. The chain is Large ribosomal subunit protein uL18 from Chlorobium phaeobacteroides (strain DSM 266 / SMG 266 / 2430).